The chain runs to 367 residues: Mitochondrial distribution and morphology protein 34 (367 aa).

An SMP-LTD domain is found at 1–197; the sequence is MSFNFTWPEF…LPSIIHRLSQ (197 aa). Disordered regions lie at residues 267-311 and 347-367; these read QGLK…ALSS and PAHR…FHLS. Residues 286-302 are compositionally biased toward polar residues; it reads FHTTSRVRVPSSLESNA.

This sequence belongs to the MDM34 family. In terms of assembly, component of the ER-mitochondria encounter structure (ERMES) or MDM complex, composed of MMM1, MDM10, MDM12 and MDM34.

The protein localises to the mitochondrion outer membrane. Functionally, component of the ERMES/MDM complex, which serves as a molecular tether to connect the endoplasmic reticulum (ER) and mitochondria. Components of this complex are involved in the control of mitochondrial shape and protein biogenesis, and function in nonvesicular lipid trafficking between the ER and mitochondria. MDM34 is required for the interaction of the ER-resident membrane protein MMM1 and the outer mitochondrial membrane-resident beta-barrel protein MDM10. The polypeptide is Mitochondrial distribution and morphology protein 34 (Malassezia globosa (strain ATCC MYA-4612 / CBS 7966) (Dandruff-associated fungus)).